We begin with the raw amino-acid sequence, 435 residues long: Methylenetetrahydrofolate--tRNA-(uracil-5-)-methyltransferase TrmFO (435 aa).

An FAD-binding site is contributed by 9-14 (GAGLAG).

The protein belongs to the MnmG family. TrmFO subfamily. The cofactor is FAD.

Its subcellular location is the cytoplasm. The enzyme catalyses uridine(54) in tRNA + (6R)-5,10-methylene-5,6,7,8-tetrahydrofolate + NADH + H(+) = 5-methyluridine(54) in tRNA + (6S)-5,6,7,8-tetrahydrofolate + NAD(+). It carries out the reaction uridine(54) in tRNA + (6R)-5,10-methylene-5,6,7,8-tetrahydrofolate + NADPH + H(+) = 5-methyluridine(54) in tRNA + (6S)-5,6,7,8-tetrahydrofolate + NADP(+). Catalyzes the folate-dependent formation of 5-methyl-uridine at position 54 (M-5-U54) in all tRNAs. This is Methylenetetrahydrofolate--tRNA-(uracil-5-)-methyltransferase TrmFO from Staphylococcus epidermidis (strain ATCC 35984 / DSM 28319 / BCRC 17069 / CCUG 31568 / BM 3577 / RP62A).